The chain runs to 426 residues: Glutamyl-tRNA reductase (426 aa).

Substrate-binding positions include 49 to 52 (TCNR), Ser101, 106 to 108 (EPQ), and Gln112. Residue Cys50 is the Nucleophile of the active site. 181–186 (GAGETI) lines the NADP(+) pocket. The interval 405-426 (RLFPEKPGYQHPPHSYPDREDR) is disordered.

The protein belongs to the glutamyl-tRNA reductase family. As to quaternary structure, homodimer.

The enzyme catalyses (S)-4-amino-5-oxopentanoate + tRNA(Glu) + NADP(+) = L-glutamyl-tRNA(Glu) + NADPH + H(+). The protein operates within porphyrin-containing compound metabolism; protoporphyrin-IX biosynthesis; 5-aminolevulinate from L-glutamyl-tRNA(Glu): step 1/2. Its function is as follows. Catalyzes the NADPH-dependent reduction of glutamyl-tRNA(Glu) to glutamate 1-semialdehyde (GSA). The sequence is that of Glutamyl-tRNA reductase from Xanthomonas axonopodis pv. citri (strain 306).